Consider the following 536-residue polypeptide: Nucleosome assembly protein 1-like 3 (536 aa).

2 disordered regions span residues 1–104 and 160–338; these read MAEA…DKLP and PTEE…KEDP. Residues 35 to 75 show a composition bias toward low complexity; that stretch reads SNSSSSTTSCGSTGSSSSSSSSSSSSSSSSSGSSGSSSNGS. The span at 77–95 shows a compositional bias: basic residues; sequence LHQKKRVPGPSRRAQRRPS. The segment covering 160–184 has biased composition (acidic residues); sequence PTEEECEWNSEEEFSGDEEMQDDTP. Composition is skewed to basic and acidic residues over residues 199-220 and 227-269; these read GKENTEVKEEVKDVPEEVPEAK and PKET…KTDS. Residues 287 to 300 are compositionally biased toward polar residues; sequence TQANAEYTDQPTED. Basic and acidic residues predominate over residues 306-324; sequence PVREAQKRVPETRPEERVN.

This sequence belongs to the nucleosome assembly protein (NAP) family.

The protein resides in the nucleus. The polypeptide is Nucleosome assembly protein 1-like 3 (Nap1l3) (Rattus norvegicus (Rat)).